A 1025-amino-acid chain; its full sequence is DNA ligase 4 (1025 aa).

The tract at residues 1 to 36 is disordered; it reads MMQPTPAPSSAPGSPQRTQAEPEMETPSYPQPPQNV. The ATP site is built by glutamate 289, lysine 291, leucine 292, arginine 296, glutamate 349, phenylalanine 387, glutamate 447, lysine 452, lysine 469, and lysine 471. Lysine 291 functions as the N6-AMP-lysine intermediate in the catalytic mechanism. Glutamate 349 contributes to the Mg(2+) binding site. A Mg(2+)-binding site is contributed by glutamate 447. A BRCT 1 domain is found at 667-763; sequence VKTDIFNGMK…EPAPFKKKYF (97 aa). The disordered stretch occupies residues 773–904; that stretch reads ADEYNEDDGE…TTPDVDGDVK (132 aa). Acidic residues-rich tracts occupy residues 775–785 and 806–816; these read EYNEDDGEEEG and SETEDEDEEQA. Residues 817–838 are compositionally biased toward basic and acidic residues; it reads PEIKEEQDGELHEWLKVDDRKS. The segment covering 845–870 has biased composition (acidic residues); that stretch reads DEEDSVTEDDSDNADVADEEEPDLDD. Positions 891-904 are enriched in basic and acidic residues; the sequence is RHRETTPDVDGDVK. The BRCT 2 domain maps to 915–1025; the sequence is DPDVIFKHLC…TLLDEEGESF (111 aa).

The protein belongs to the ATP-dependent DNA ligase family. Requires Mg(2+) as cofactor.

It is found in the nucleus. It catalyses the reaction ATP + (deoxyribonucleotide)n-3'-hydroxyl + 5'-phospho-(deoxyribonucleotide)m = (deoxyribonucleotide)n+m + AMP + diphosphate.. Functionally, DNA ligase involved in DNA non-homologous end joining (NHEJ); required for double-strand break (DSB) repair. This chain is DNA ligase 4 (LIG4), found in Coprinopsis cinerea (strain Okayama-7 / 130 / ATCC MYA-4618 / FGSC 9003) (Inky cap fungus).